Reading from the N-terminus, the 603-residue chain is uncharacterized protein (603 aa).

Residues methionine 1–alanine 93 form the PE domain.

Belongs to the mycobacterial PE family. PGRS subfamily.

This is an uncharacterized protein from Mycobacterium tuberculosis (strain ATCC 25618 / H37Rv).